The following is a 230-amino-acid chain: RING finger protein 141 (230 aa).

Residue glycine 2 is the site of N-myristoyl glycine attachment. The RING-type zinc finger occupies 155-192 (CCICMDGRADLILPCAHSFCQKCIDKWSDRHRNCPICR).

The protein localises to the membrane. May be involved in spermatogenesis. The sequence is that of RING finger protein 141 (RNF141) from Pongo abelii (Sumatran orangutan).